Reading from the N-terminus, the 80-residue chain is Acyl carrier protein (80 aa).

Positions 4-79 (EEILQKVCSI…DAVKFIEEKK (76 aa)) constitute a Carrier domain. O-(pantetheine 4'-phosphoryl)serine is present on Ser39.

It belongs to the acyl carrier protein (ACP) family. 4'-phosphopantetheine is transferred from CoA to a specific serine of apo-ACP by AcpS. This modification is essential for activity because fatty acids are bound in thioester linkage to the sulfhydryl of the prosthetic group.

The protein resides in the cytoplasm. Its pathway is lipid metabolism; fatty acid biosynthesis. Functionally, carrier of the growing fatty acid chain in fatty acid biosynthesis. This chain is Acyl carrier protein, found in Prochlorococcus marinus subsp. pastoris (strain CCMP1986 / NIES-2087 / MED4).